Reading from the N-terminus, the 1239-residue chain is DNA topoisomerase 2 (1239 aa).

Residues Asn65, Asn96, 124-126, 137-144, and 354-356 contribute to the ATP site; these read SSN, GRHGYGAK, and QSK. One can recognise a Toprim domain in the interval 434 to 548; it reads RTLIVTEGDS…SLLQHNPGYI (115 aa). Residues Glu440, Asp517, and Asp519 each contribute to the Mg(2+) site. In terms of domain architecture, Topo IIA-type catalytic spans 685-1101; the sequence is IPHCVDGLKP…TPVKMWLTDL (417 aa). Tyr775 (O-(5'-phospho-DNA)-tyrosine intermediate) is an active-site residue. The interaction with DNA stretch occupies residues 956–965; that stretch reads ALSQRIYING. A disordered region spans residues 1167–1206; that stretch reads PASKRKPEDTYGGALSSGGSTRNVGKRLTGARGAKKKKVV.

The protein belongs to the type II topoisomerase family. In terms of assembly, homodimer. Requires Mg(2+) as cofactor. Mn(2+) serves as cofactor. Ca(2+) is required as a cofactor.

It localises to the nucleus. The protein resides in the mitochondrion matrix. The protein localises to the kinetoplast. It carries out the reaction ATP-dependent breakage, passage and rejoining of double-stranded DNA.. Control of topological states of DNA by transient breakage and subsequent rejoining of DNA strands. Topoisomerase II makes double-strand breaks. The protein is DNA topoisomerase 2 (TOP2) of Crithidia fasciculata.